The following is a 183-amino-acid chain: Putative 3-methyladenine DNA glycosylase (183 aa).

Belongs to the DNA glycosylase MPG family.

This is Putative 3-methyladenine DNA glycosylase from Legionella pneumophila (strain Lens).